A 238-amino-acid polypeptide reads, in one-letter code: Ribosomal RNA small subunit methyltransferase G (238 aa).

S-adenosyl-L-methionine-binding positions include Gly77, Phe82, 128 to 129 (AE), and Arg147.

The protein belongs to the methyltransferase superfamily. RNA methyltransferase RsmG family.

It is found in the cytoplasm. In terms of biological role, specifically methylates the N7 position of guanine in position 535 of 16S rRNA. This Geobacillus sp. (strain WCH70) protein is Ribosomal RNA small subunit methyltransferase G.